We begin with the raw amino-acid sequence, 254 residues long: Ciliary microtubule associated protein 1A (254 aa).

2 STPGR repeats span residues 180 to 205 (PGPAAYRQTDVQVTKFKAPQYTMAAR) and 216 to 241 (PGPGAHSPEKVTMTRPCAPVVSFGIK). The disordered stretch occupies residues 207–226 (EPPGDKTLKPGPGAHSPEKV).

Belongs to the CIMAP family. Microtubule inner protein component of sperm flagellar doublet microtubules.

Its subcellular location is the cytoplasm. The protein resides in the cytoskeleton. It localises to the flagellum axoneme. Its function is as follows. Outer dense fibers are filamentous structures located on the outside of the axoneme in the midpiece and principal piece of the mammalian sperm tail. May help to maintain the passive elastic structures and elastic recoil of the sperm tail. In Bos taurus (Bovine), this protein is Ciliary microtubule associated protein 1A (CIMAP1A).